Reading from the N-terminus, the 82-residue chain is Large ribosomal subunit protein uL23 (82 aa).

This sequence belongs to the universal ribosomal protein uL23 family. In terms of assembly, part of the 50S ribosomal subunit. Contacts protein L29.

Binds to 23S rRNA. One of the proteins that surrounds the polypeptide exit tunnel on the outside of the ribosome. The polypeptide is Large ribosomal subunit protein uL23 (Methanococcoides burtonii (strain DSM 6242 / NBRC 107633 / OCM 468 / ACE-M)).